The following is a 929-amino-acid chain: von Willebrand factor C and EGF domain-containing protein (929 aa).

The first 21 residues, 1 to 21, serve as a signal peptide directing secretion; that stretch reads MWARLLLHVAYILIPLLGSSA. The region spanning 70–98 is the EGF-like 1 domain; it reads LCSFGCGSGICIAPNVCSCQDGEQGATCP. The region spanning 142 to 180 is the EGF-like 2; calcium-binding domain; that stretch reads DIDECLSSSCEGHCVNTEGGFVCECGPGMQLSADRHSCQ. 9 disulfides stabilise this stretch: C146/C155, C151/C164, C166/C179, C185/C194, C190/C203, C205/C218, C224/C237, C233/C246, and C248/C261. Positions 181–219 constitute an EGF-like 3; calcium-binding domain; sequence DTDECLGTPCQQRCKNSIGSYKCSCRAGFHLHGNRHSCI. Positions 220-262 constitute an EGF-like 4; calcium-binding domain; sequence DVNECRRPQERRVCHHTCHNTVGSFLCTCRPGFRLRSDRVSCE. Disordered regions lie at residues 291–317 and 339–374; these read AGRP…RTIS and PSSS…LGAG. Residues 339-353 are compositionally biased toward low complexity; the sequence is PSSSPLGTLGPPSLL. VWFC domains are found at residues 376 to 433, 433 to 494, 491 to 552, 558 to 618, 619 to 677, and 677 to 762; these read SSCW…PSCT, TGCF…GRCY, GRCY…FTCR, TGCS…PDCS, AGCT…PVCH, and HDCN…VNCS. N-linked (GlcNAc...) asparagine glycosylation is found at N454 and N464. Positions 731-774 are disordered; that stretch reads PLEEKQQPSPHGELAKAARNARGDTEVPVNCSSCPGPPSASPTR. Basic and acidic residues predominate over residues 743-755; sequence ELAKAARNARGDT. N-linked (GlcNAc...) asparagine glycosylation is present at N787. Polar residues predominate over residues 791–807; that stretch reads IQSASPSPPIAQTSSSP. Disordered stretches follow at residues 791-861 and 879-929; these read IQSA…SSTF and AETP…NSTI. The segment covering 889–903 has biased composition (low complexity); the sequence is LSETLTTSSSSQRLS.

It localises to the secreted. Functionally, may be a regulatory element in the beta-catenin signaling pathway and a target for chemoprevention of hapatocellular carcinoma. The protein is von Willebrand factor C and EGF domain-containing protein (Vwce) of Mus musculus (Mouse).